A 213-amino-acid polypeptide reads, in one-letter code: Embryo-specific protein ATS3 (213 aa).

A signal peptide spans 1–21; sequence MTFPSLSVSFLFFAFIFVTHA. The 115-residue stretch at 34–148 folds into the PLAT domain; sequence CPYTVVVMTS…LNTWYGHNNC (115 aa). A disordered region spans residues 147–188; it reads NCNTTGRPSSPDLPPPHFPPEFPPETPTTPPPPPPRPSAASR. N-linked (GlcNAc...) asparagine glycosylation occurs at asparagine 149. Pro residues predominate over residues 157–183; the sequence is PDLPPPHFPPEFPPETPTTPPPPPPRP.

As to expression, expressed in seeds. Expression is restricted to the developing embryo.

Its subcellular location is the secreted. Its function is as follows. May play a role during embryo development. This chain is Embryo-specific protein ATS3, found in Arabidopsis thaliana (Mouse-ear cress).